Here is a 456-residue protein sequence, read N- to C-terminus: Palmitoyltransferase PFA4 (456 aa).

Residues 1-9 lie on the Cytoplasmic side of the membrane; it reads MAARNWSRV. Residues 10 to 30 traverse the membrane as a helical segment; the sequence is WVGGTVILISFIAFSSQIFVI. The Lumenal portion of the chain corresponds to 31–37; the sequence is WPWYGRE. The helical transmembrane segment at 38-58 threads the bilayer; the sequence is ISLDLLMLLVPLNLAAFMIFW. Topologically, residues 59–138 are cytoplasmic; that stretch reads NYRLCVITSP…GNCVGFYNQG (80 aa). The DHHC domain occupies 95 to 145; that stretch reads RYCKNCAHYKPPRAHHCRQCKTCWLKLDHHCPWIGNCVGFYNQGHFIRFLL. Residue cysteine 125 is the S-palmitoyl cysteine intermediate of the active site. The chain crosses the membrane as a helical span at residues 139–159; the sequence is HFIRFLLWVDIGTTFHLIIMV. The Lumenal portion of the chain corresponds to 160–176; the sequence is RRVLYIAEYYHEPTLAD. Residues 177–197 form a helical membrane-spanning segment; the sequence is VLFLVFNFATCVPVWLCVGMF. The Cytoplasmic portion of the chain corresponds to 198–456; it reads SIYHVYLACG…DPEEESGYTH (259 aa). Residues 284–377 are disordered; sequence PPQDPSRLPN…YDHYDEGPMY (94 aa). A compositionally biased stretch (pro residues) spans 285–298; that stretch reads PQDPSRLPNPPPIP. The segment covering 309 to 321 has biased composition (polar residues); sequence NGFNPNLRPTNSL. Residues 337–352 show a composition bias toward basic and acidic residues; that stretch reads SHEQGRHYSSGDERDN.

It belongs to the DHHC palmitoyltransferase family. PFA4 subfamily.

It localises to the endoplasmic reticulum membrane. It catalyses the reaction L-cysteinyl-[protein] + hexadecanoyl-CoA = S-hexadecanoyl-L-cysteinyl-[protein] + CoA. In terms of biological role, mediates the reversible addition of palmitate to target proteins, thereby regulating their membrane association and biological function. Responsible for the modification of a subset of proteins that are critical in cryptococcal pathogenesis, with substrates involved in cell wall synthesis, signal transduction, and membrane trafficking. Palmitoylates chitin synthase CHS3. The protein is Palmitoyltransferase PFA4 of Cryptococcus neoformans var. grubii serotype A (strain H99 / ATCC 208821 / CBS 10515 / FGSC 9487) (Filobasidiella neoformans var. grubii).